The following is a 479-amino-acid chain: Sulfate adenylyltransferase subunit 1 (479 aa).

Residues 22–238 enclose the tr-type G domain; it reads KDMLRFLTCG…DSMDISKEPK (217 aa). The interval 31–38 is G1; sequence GSVDDGKS. GTP is bound at residue 31–38; the sequence is GSVDDGKS. The interval 89–93 is G2; the sequence is GITID. The segment at 110-113 is G3; sequence DTPG. GTP contacts are provided by residues 110-114 and 165-168; these read DTPGH and NKMD. The interval 165 to 168 is G4; sequence NKMD. The G5 stretch occupies residues 202–204; it reads SAL.

Belongs to the TRAFAC class translation factor GTPase superfamily. Classic translation factor GTPase family. CysN/NodQ subfamily. Heterodimer composed of CysD, the smaller subunit, and CysN.

The catalysed reaction is sulfate + ATP + H(+) = adenosine 5'-phosphosulfate + diphosphate. It functions in the pathway sulfur metabolism; hydrogen sulfide biosynthesis; sulfite from sulfate: step 1/3. Functionally, with CysD forms the ATP sulfurylase (ATPS) that catalyzes the adenylation of sulfate producing adenosine 5'-phosphosulfate (APS) and diphosphate, the first enzymatic step in sulfur assimilation pathway. APS synthesis involves the formation of a high-energy phosphoric-sulfuric acid anhydride bond driven by GTP hydrolysis by CysN coupled to ATP hydrolysis by CysD. The protein is Sulfate adenylyltransferase subunit 1 of Sulfurovum sp. (strain NBC37-1).